We begin with the raw amino-acid sequence, 311 residues long: MATRLLCWTALLLPIIAATAAASPLPEACPVPTAAEEILGPGGTCTTLDRRGDPVGVIEGDEVTLAKAITLLHMNKDDYIAVLFYASWCPFSQECKPNFEILASLFPSIRHFAFEESSIRPSIISRYGIHGFPTLFLLNSTMRVRYHGPRTVKSLAAFYRDVSGFDVSMTSEAVLHSVDGIELKKDAEQENCPFWWARSPEKILQQDTYLALATAFVILRLLYLLFPKIGSFAKRAWRRHTLFPNLVGVHEYFFTYLEQARHKFFRLYPSKRGNLQEGARNATAWASKSLASVSIGEPSTIGRTNSTNELR.

The signal sequence occupies residues Met1–Ala22. Residues Ser23 to Gly164 form the Thioredoxin domain. The N-linked (GlcNAc...) asparagine glycan is linked to Asn139. Residues Leu210–Gly230 form a helical membrane-spanning segment. Asn281 and Asn305 each carry an N-linked (GlcNAc...) asparagine glycan.

The protein localises to the membrane. The sequence is that of 5'-adenylylsulfate reductase-like 3 (APRL3) from Oryza sativa subsp. japonica (Rice).